We begin with the raw amino-acid sequence, 79 residues long: Acyl carrier protein (79 aa).

The Carrier domain maps to 4-79; that stretch reads EQILVDVQEA…DVVAYIETKL (76 aa). S39 carries the O-(pantetheine 4'-phosphoryl)serine modification.

The protein belongs to the acyl carrier protein (ACP) family. In terms of processing, 4'-phosphopantetheine is transferred from CoA to a specific serine of apo-ACP by AcpS. This modification is essential for activity because fatty acids are bound in thioester linkage to the sulfhydryl of the prosthetic group.

The protein localises to the cytoplasm. The protein operates within lipid metabolism; fatty acid biosynthesis. Carrier of the growing fatty acid chain in fatty acid biosynthesis. The polypeptide is Acyl carrier protein (Exiguobacterium sp. (strain ATCC BAA-1283 / AT1b)).